Here is a 106-residue protein sequence, read N- to C-terminus: uncharacterized protein (106 aa).

The segment at 38-106 (KGNKKSKAAT…STHLPYHGSY (69 aa)) is disordered. 2 stretches are compositionally biased toward basic and acidic residues: residues 57-71 (TRQERDLTDRKHRPE) and 82-96 (WKKEVTTRSRPKETS).

It localises to the mitochondrion. This is an uncharacterized protein from Arabidopsis thaliana (Mouse-ear cress).